The chain runs to 38 residues: Photosystem II reaction center protein X 2 (38 aa).

A helical transmembrane segment spans residues 8-28; it reads FLWSLVYGAVVLGLLFGAIVF.

Belongs to the PsbX family. Type 1 subfamily. PSII is composed of 1 copy each of membrane proteins PsbA, PsbB, PsbC, PsbD, PsbE, PsbF, PsbH, PsbI, PsbJ, PsbK, PsbL, PsbM, PsbT, PsbX, PsbY, PsbZ, Psb30/Ycf12, peripheral proteins PsbO, CyanoQ (PsbQ), PsbU, PsbV and a large number of cofactors. It forms dimeric complexes.

The protein resides in the cellular thylakoid membrane. Functionally, involved in the binding and/or turnover of quinones at the Q(B) site of photosystem II (PSII). PSII is a light-driven water plastoquinone oxidoreductase, using light energy to abstract electrons from H(2)O, generating a proton gradient subsequently used for ATP formation. The chain is Photosystem II reaction center protein X 2 from Synechococcus sp. (strain JA-3-3Ab) (Cyanobacteria bacterium Yellowstone A-Prime).